The following is a 369-amino-acid chain: Melanoma-associated antigen 10 (369 aa).

The disordered stretch occupies residues 1 to 131 (MPRAPKRQRC…VLPDSESLPR (131 aa)). Residues 39–62 (SSSTSTSSSFPSSFPSSSSSSSSS) are compositionally biased toward low complexity. Polar residues-rich tracts occupy residues 85 to 96 (QSAQIACSSPSV) and 107 to 121 (EGSS…STLQ). One can recognise an MAGE domain in the interval 134-333 (IDEKVTDLVQ…RSFPLWYEEA (200 aa)). The tract at residues 340–369 (RAQDRIATTDDTTAMASASSSATGSFSYPE) is disordered. Low complexity predominate over residues 348–369 (TDDTTAMASASSSATGSFSYPE).

In terms of tissue distribution, expressed in many tumors of several types, such as melanoma, head and neck squamous cell carcinoma, lung carcinoma and breast carcinoma, but not in normal tissues except for spermatogonia, spermatocytes and placenta.

It localises to the nucleus. Functionally, not known, though may play a role in embryonal development and tumor transformation or aspects of tumor progression. This chain is Melanoma-associated antigen 10 (MAGEA10), found in Homo sapiens (Human).